Consider the following 126-residue polypeptide: Histone H2B type 1-N (126 aa).

The segment covering 1 to 12 (MPEPSKSAPAPK) has biased composition (low complexity). Residues 1–36 (MPEPSKSAPAPKKGSKKAVTKAQKKDGKKRKRSRKE) form a disordered region. Pro2 carries the post-translational modification N-acetylproline. Position 3 is an ADP-ribosyl glutamic acid (Glu3). At Lys6 the chain carries N6-(2-hydroxyisobutyryl)lysine; alternate. Lys6 carries the N6-(beta-hydroxybutyryl)lysine; alternate modification. Lys6 is modified (N6-acetyllysine; alternate). An N6-butyryllysine; alternate modification is found at Lys6. Position 6 is an N6-crotonyllysine; alternate (Lys6). Lys6 is modified (N6-lactoyllysine; alternate). Lys6 participates in a covalent cross-link: Glycyl lysine isopeptide (Lys-Gly) (interchain with G-Cter in SUMO2); alternate. Position 7 is an ADP-ribosylserine (Ser7). Lys12 carries the post-translational modification N6-(beta-hydroxybutyryl)lysine; alternate. N6-acetyllysine; alternate is present on residues Lys12 and Lys13. Residues Lys12 and Lys13 each carry the N6-crotonyllysine; alternate modification. Lys12 is subject to N6-lactoyllysine; alternate. Lys13 is subject to N6-(2-hydroxyisobutyryl)lysine; alternate. Residue Ser15 is modified to Phosphoserine; by STK4/MST1. An N6-acetyllysine; alternate mark is found at Lys16, Lys17, Lys21, and Lys24. 4 positions are modified to N6-crotonyllysine; alternate: Lys16, Lys17, Lys21, and Lys24. 4 positions are modified to N6-lactoyllysine; alternate: Lys16, Lys17, Lys21, and Lys24. The residue at position 17 (Lys17) is an N6-glutaryllysine; alternate. Residues Lys21 and Lys24 each carry the N6-(2-hydroxyisobutyryl)lysine; alternate modification. Lys21 is subject to N6-(beta-hydroxybutyryl)lysine; alternate. Lys21 is modified (N6-butyryllysine; alternate). A Glycyl lysine isopeptide (Lys-Gly) (interchain with G-Cter in SUMO2); alternate cross-link involves residue Lys21. Lys25 carries the post-translational modification N6-(2-hydroxyisobutyryl)lysine. Lys35 is subject to N6-(2-hydroxyisobutyryl)lysine; alternate. Lys35 carries the N6-(beta-hydroxybutyryl)lysine; alternate modification. An N6-crotonyllysine; alternate modification is found at Lys35. Lys35 is modified (N6-glutaryllysine; alternate). Position 35 is an N6-succinyllysine; alternate (Lys35). Lys35 is covalently cross-linked (Glycyl lysine isopeptide (Lys-Gly) (interchain with G-Cter in ubiquitin); alternate). Glu36 is modified (polyADP-ribosyl glutamic acid). Ser37 is modified (phosphoserine; by AMPK). Lys44, Lys47, and Lys58 each carry N6-(2-hydroxyisobutyryl)lysine; alternate. Lys44 is subject to N6-lactoyllysine; alternate. Lys44 and Lys47 each carry N6-glutaryllysine; alternate. The residue at position 47 (Lys47) is an N6-methyllysine; alternate. Lys58 is subject to N6,N6-dimethyllysine; alternate. Dimethylated arginine is present on Arg80. N6-(2-hydroxyisobutyryl)lysine; alternate is present on Lys86. N6-acetyllysine; alternate is present on Lys86. N6-lactoyllysine; alternate is present on Lys86. Lys86 bears the N6,N6,N6-trimethyllysine; alternate mark. Residues Arg87 and Arg93 each carry the omega-N-methylarginine modification. Lys109 carries the post-translational modification N6-(2-hydroxyisobutyryl)lysine; alternate. N6-lactoyllysine; alternate is present on Lys109. Lys109 carries the post-translational modification N6-glutaryllysine; alternate. Lys109 is modified (N6-methyllysine; alternate). Ser113 carries an O-linked (GlcNAc) serine glycan. Phosphothreonine is present on Thr116. Residues Lys117 and Lys121 each carry the N6-(2-hydroxyisobutyryl)lysine; alternate modification. Lys117 carries the N6-(beta-hydroxybutyryl)lysine; alternate modification. Lys117 and Lys121 each carry N6-lactoyllysine; alternate. An N6-glutaryllysine; alternate mark is found at Lys117 and Lys121. Residues Lys117 and Lys121 each carry the N6-succinyllysine; alternate modification. Residue Lys117 is modified to N6-methylated lysine; alternate. Residue Lys121 forms a Glycyl lysine isopeptide (Lys-Gly) (interchain with G-Cter in ubiquitin); alternate linkage.

The protein belongs to the histone H2B family. The nucleosome is a histone octamer containing two molecules each of H2A, H2B, H3 and H4 assembled in one H3-H4 heterotetramer and two H2A-H2B heterodimers. The octamer wraps approximately 147 bp of DNA. In terms of processing, monoubiquitination at Lys-35 (H2BK34Ub) by the MSL1/MSL2 dimer is required for histone H3 'Lys-4' (H3K4me) and 'Lys-79' (H3K79me) methylation and transcription activation at specific gene loci, such as HOXA9 and MEIS1 loci. Similarly, monoubiquitination at Lys-121 (H2BK120Ub) by the RNF20/40 complex gives a specific tag for epigenetic transcriptional activation and is also prerequisite for histone H3 'Lys-4' and 'Lys-79' methylation. It also functions cooperatively with the FACT dimer to stimulate elongation by RNA polymerase II. H2BK120Ub also acts as a regulator of mRNA splicing: deubiquitination by USP49 is required for efficient cotranscriptional splicing of a large set of exons. Phosphorylated on Ser-15 (H2BS14ph) by STK4/MST1 during apoptosis; which facilitates apoptotic chromatin condensation. Also phosphorylated on Ser-15 in response to DNA double strand breaks (DSBs), and in correlation with somatic hypermutation and immunoglobulin class-switch recombination. Phosphorylation at Ser-37 (H2BS36ph) by AMPK in response to stress promotes transcription. Post-translationally, glcNAcylation at Ser-113 promotes monoubiquitination of Lys-121. It fluctuates in response to extracellular glucose, and associates with transcribed genes. In terms of processing, ADP-ribosylated by PARP1 or PARP2 on Ser-7 (H2BS6ADPr) in response to DNA damage. H2BS6ADPr promotes recruitment of CHD1L. Mono-ADP-ribosylated on Glu-3 (H2BE2ADPr) by PARP3 in response to single-strand breaks. Poly ADP-ribosylation on Glu-36 (H2BE35ADPr) by PARP1 regulates adipogenesis: it inhibits phosphorylation at Ser-37 (H2BS36ph), thereby blocking expression of pro-adipogenetic genes. Crotonylation (Kcr) is specifically present in male germ cells and marks testis-specific genes in post-meiotic cells, including X-linked genes that escape sex chromosome inactivation in haploid cells. Crotonylation marks active promoters and enhancers and confers resistance to transcriptional repressors. It is also associated with post-meiotically activated genes on autosomes. Post-translationally, lactylated in macrophages by EP300/P300 by using lactoyl-CoA directly derived from endogenous or exogenous lactate, leading to stimulates gene transcription.

The protein localises to the nucleus. Its subcellular location is the chromosome. Its function is as follows. Core component of nucleosome. Nucleosomes wrap and compact DNA into chromatin, limiting DNA accessibility to the cellular machineries which require DNA as a template. Histones thereby play a central role in transcription regulation, DNA repair, DNA replication and chromosomal stability. DNA accessibility is regulated via a complex set of post-translational modifications of histones, also called histone code, and nucleosome remodeling. The chain is Histone H2B type 1-N (H2BC15) from Bos taurus (Bovine).